The following is a 240-amino-acid chain: Eukaryotic translation initiation factor 4E-3 (240 aa).

Residues 1-51 (MVVTDSPVSGIMADQNIDPNTTTSPSPKEKHVSAIKAISGDEKAPSKEKKN) are disordered. Residues 17-26 (IDPNTTTSPS) show a composition bias toward polar residues. Residues 39 to 51 (SGDEKAPSKEKKN) show a composition bias toward basic and acidic residues. EIF4G-binding regions lie at residues 65–68 (HCFQ) and 75–111 (FDNP…NNIH). MRNA is bound by residues 83-88 (NQVIWG), Lys115, and 133-134 (WE). Residues Cys138 and Cys176 are joined by a disulfide bond. The interval 159 to 168 (NTLLALVGEQ) is EIF4G-binding. Residues 183-188 (RARGDR) and 228-232 (KTLDR) each bind mRNA.

This sequence belongs to the eukaryotic initiation factor 4E family. In terms of assembly, EIF4F is a multi-subunit complex, the composition of which varies with external and internal environmental conditions. It is composed of at least EIF4A, EIF4E and EIF4G. EIF4E is also known to interact with other partners. In higher plants two isoforms of EIF4F have been identified, named isoform EIF4F and isoform EIF(iso)4F. Isoform EIF4F has subunits p220 and p26, whereas isoform EIF(iso)4F has subunits p82 and p28. In terms of processing, according to the redox status, the Cys-138-Cys-176 disulfide bridge may have a role in regulating protein function by affecting its ability to bind capped mRNA.

The protein localises to the nucleus. The protein resides in the cytoplasm. In terms of biological role, component of the protein complex eIF4F, which is involved in the recognition of the mRNA cap, ATP-dependent unwinding of 5'-terminal secondary structure and recruitment of mRNA to the ribosome. Recognizes and binds the 7-methylguanosine-containing mRNA cap during an early step in the initiation of protein synthesis and facilitates ribosome binding by inducing the unwinding of the mRNAs secondary structures. This is Eukaryotic translation initiation factor 4E-3 from Arabidopsis thaliana (Mouse-ear cress).